A 134-amino-acid chain; its full sequence is Large ribosomal subunit protein eL32 (134 aa).

Belongs to the eukaryotic ribosomal protein eL32 family.

The polypeptide is Large ribosomal subunit protein eL32 (RpL32) (Drosophila melanogaster (Fruit fly)).